The chain runs to 278 residues: Elongation factor Ts (278 aa).

Residues 82–85 are involved in Mg(2+) ion dislocation from EF-Tu; sequence TDFV.

Belongs to the EF-Ts family.

It is found in the cytoplasm. Associates with the EF-Tu.GDP complex and induces the exchange of GDP to GTP. It remains bound to the aminoacyl-tRNA.EF-Tu.GTP complex up to the GTP hydrolysis stage on the ribosome. This is Elongation factor Ts from Streptomyces avermitilis (strain ATCC 31267 / DSM 46492 / JCM 5070 / NBRC 14893 / NCIMB 12804 / NRRL 8165 / MA-4680).